The chain runs to 309 residues: ASC1-like protein 1 (309 aa).

6 helical membrane-spanning segments follow: residues 27–47 (FFAL…LDCF), 84–104 (CVYF…EPWF), 130–150 (AVYM…MFWE), 156–176 (FGVS…SYVF), 215–235 (FLLF…FWIL), and 260–280 (YVFN…WVLI). The TLC domain occupies 75–289 (RKFKESAWKC…IYRMLVRQIK (215 aa)).

The protein localises to the endoplasmic reticulum membrane. In terms of biological role, mediates resistance to sphinganine-analog mycotoxins (SAMs) by restoring the sphingolipid biosynthesis. Could salvage the transport of GPI-anchored proteins from the endoplasmic reticulum to the Golgi apparatus in ceramides-depleted cells after SAM exposure. This Oryza sativa subsp. japonica (Rice) protein is ASC1-like protein 1.